A 160-amino-acid chain; its full sequence is Flavodoxin (160 aa).

The region spanning 3-153 (ISILYSSKTG…NARIFGERIA (151 aa)) is the Flavodoxin-like domain.

Belongs to the flavodoxin family. Requires FMN as cofactor.

Its function is as follows. Low-potential electron donor to a number of redox enzymes. This Clostridium saccharobutylicum protein is Flavodoxin (floX).